The primary structure comprises 240 residues: MMNTYFQQVNRYLTMVAQQESEQINRVAQLIVKRLVQGGIIQLFGSGHSMLLAQECYFRAGGLVPVKPIHIESLMLHQGARQSSQNEKKQAFLAPYKDELQFDDKDVCIIISTSANNPVPIDMAIYAKEAGAHTISLQSLAYQQQPSRHPSGQRLEDIADDVLNTHVPLGDGVLTVDEFQYGPVSTVLGAALLNALCAQIIEILHEQGASLPVFASSNLGNTNNDELIDQYGQRDSFLRP.

The SIS domain maps to 31–206 (IVKRLVQGGI…CAQIIEILHE (176 aa)).

It belongs to the UPF0309 family.

The polypeptide is UPF0309 protein in nagA 3'region (Lysinibacillus sphaericus (Bacillus sphaericus)).